A 320-amino-acid polypeptide reads, in one-letter code: Glycerol-3-phosphate dehydrogenase [NAD(P)+] (320 aa).

NADPH-binding residues include phenylalanine 11, arginine 30, and lysine 102. Sn-glycerol 3-phosphate-binding residues include lysine 102, glycine 130, and serine 132. NADPH is bound at residue alanine 134. Positions 185, 238, 248, 249, and 250 each coordinate sn-glycerol 3-phosphate. Lysine 185 acts as the Proton acceptor in catalysis. Arginine 249 is an NADPH binding site. Glutamate 270 lines the NADPH pocket.

It belongs to the NAD-dependent glycerol-3-phosphate dehydrogenase family.

The protein resides in the cytoplasm. The enzyme catalyses sn-glycerol 3-phosphate + NAD(+) = dihydroxyacetone phosphate + NADH + H(+). It carries out the reaction sn-glycerol 3-phosphate + NADP(+) = dihydroxyacetone phosphate + NADPH + H(+). It functions in the pathway membrane lipid metabolism; glycerophospholipid metabolism. Functionally, catalyzes the reduction of the glycolytic intermediate dihydroxyacetone phosphate (DHAP) to sn-glycerol 3-phosphate (G3P), the key precursor for phospholipid synthesis. This chain is Glycerol-3-phosphate dehydrogenase [NAD(P)+], found in Roseobacter denitrificans (strain ATCC 33942 / OCh 114) (Erythrobacter sp. (strain OCh 114)).